A 116-amino-acid polypeptide reads, in one-letter code: SPbeta prophage-derived uncharacterized protein YoqA (116 aa).

In Bacillus subtilis (strain 168), this protein is SPbeta prophage-derived uncharacterized protein YoqA (yoqA).